The chain runs to 138 residues: Large ribosomal subunit protein uL16 (138 aa).

It belongs to the universal ribosomal protein uL16 family. Part of the 50S ribosomal subunit.

In terms of biological role, binds 23S rRNA and is also seen to make contacts with the A and possibly P site tRNAs. The polypeptide is Large ribosomal subunit protein uL16 (Rubrobacter xylanophilus (strain DSM 9941 / JCM 11954 / NBRC 16129 / PRD-1)).